Reading from the N-terminus, the 87-residue chain is Apolipoprotein C-I (87 aa).

The signal sequence occupies residues 1–26 (MRLFLSLPVLVVVLAMVLEGPAPAQA).

It belongs to the apolipoprotein C1 family.

Its subcellular location is the secreted. Functionally, inhibitor of lipoprotein binding to the low density lipoprotein (LDL) receptor, LDL receptor-related protein, and very low density lipoprotein (VLDL) receptor. Associates with high density lipoproteins (HDL) and the triacylglycerol-rich lipoproteins in the plasma and makes up about 10% of the protein of the VLDL and 2% of that of HDL. Appears to interfere directly with fatty acid uptake and is also the major plasma inhibitor of cholesteryl ester transfer protein (CETP). Binds free fatty acids and reduces their intracellular esterification. Modulates the interaction of APOE with beta-migrating VLDL and inhibits binding of beta-VLDL to the LDL receptor-related protein. This is Apolipoprotein C-I (APOC1) from Zalophus californianus (California sealion).